A 369-amino-acid polypeptide reads, in one-letter code: Ubiquitin-conjugating enzyme E2 Q2 (369 aa).

The segment at 117–143 (DQPLPTGQNGTTEEVTSEEEEEEEMAE) is disordered. Positions 131–143 (VTSEEEEEEEMAE) are enriched in acidic residues. Positions 198-362 (QASDRLMKEL…VQIHEKNGWY (165 aa)) constitute a UBC core domain. Cysteine 298 (glycyl thioester intermediate) is an active-site residue.

The protein belongs to the ubiquitin-conjugating enzyme family. Auto-ubiquitinated in vitro. As to expression, detected at embryo implantation sites in the luminal epithelium of pregnant endometrium. Detected at low levels in ovary and liver.

It localises to the cytoplasm. The catalysed reaction is S-ubiquitinyl-[E1 ubiquitin-activating enzyme]-L-cysteine + [E2 ubiquitin-conjugating enzyme]-L-cysteine = [E1 ubiquitin-activating enzyme]-L-cysteine + S-ubiquitinyl-[E2 ubiquitin-conjugating enzyme]-L-cysteine.. It participates in protein modification; protein ubiquitination. Its function is as follows. Accepts ubiquitin from the E1 complex and catalyzes its covalent attachment to other proteins. In vitro catalyzes 'Lys-48'-linked polyubiquitination. This Oryctolagus cuniculus (Rabbit) protein is Ubiquitin-conjugating enzyme E2 Q2 (UBE2Q2).